Consider the following 330-residue polypeptide: Tetraacyldisaccharide 4'-kinase (330 aa).

ATP is bound at residue 58–65; it reads TVGGSGKT.

It belongs to the LpxK family.

It catalyses the reaction a lipid A disaccharide + ATP = a lipid IVA + ADP + H(+). It functions in the pathway glycolipid biosynthesis; lipid IV(A) biosynthesis; lipid IV(A) from (3R)-3-hydroxytetradecanoyl-[acyl-carrier-protein] and UDP-N-acetyl-alpha-D-glucosamine: step 6/6. In terms of biological role, transfers the gamma-phosphate of ATP to the 4'-position of a tetraacyldisaccharide 1-phosphate intermediate (termed DS-1-P) to form tetraacyldisaccharide 1,4'-bis-phosphate (lipid IVA). This is Tetraacyldisaccharide 4'-kinase from Shewanella halifaxensis (strain HAW-EB4).